We begin with the raw amino-acid sequence, 321 residues long: 2-oxoglutarate-dependent dioxygenase frbH (321 aa).

The tract at residues 77–97 (SRNSDTHGYEPVATSTGAQDD) is disordered. Residues 169 to 273 (ESLSTLSMFR…RFSIAYFLRA (105 aa)) enclose the Fe2OG dioxygenase domain. Residues His194, Asp196, and His251 each coordinate Fe cation. Position 264 (Arg264) interacts with 2-oxoglutarate.

The protein belongs to the iron/ascorbate-dependent oxidoreductase family.

It participates in antifungal biosynthesis. In terms of biological role, 2-oxoglutarate-dependent dioxygenase; part of the gene cluster that mediates the biosynthesis of the antifungal antibiotic FR901469, an inhibitor of beta-1,3-glucansynthase, exerting antifungal activity against the pathogenes Candida albicans and Aspergillus fumigatus. FR901469 is a cyclic depsipeptide containing 12 amino acid residues and a fatty acid chain. The NRPS frbI contains 12 modules responsible for the formation of the depsipeptide backbone which is denoted as Acyl-Thr-Ala-Tyr-Val-4OHPro-Thr-Thr-3OHPro-threo3OHGln-Gly-Thr-Orn-OH (C71H116N14O23). The PKS frbB is probably involved in the production of the hydrocarbon chain, and the acyl-CoA ligase frbC might be involved in the transport of the chain to the peptide ptoduct of frbI. Because FR901469 contains 3 hydroxylated amino acid residues, the 3 oxygenases frbA, frbH, and frbJ might be participating in amino acid hydroxylation. As no thioesterase domains were detected in frbI or frbB, the thioesterases frbD and frbE may instead release and cyclize the products of the NRPS and PKS, respectively. This chain is 2-oxoglutarate-dependent dioxygenase frbH, found in Dothideomycetidae sp. (strain 11243) (Fungal sp. (strain No.11243)).